A 159-amino-acid chain; its full sequence is Ribosomal RNA large subunit methyltransferase H (159 aa).

S-adenosyl-L-methionine is bound by residues Leu-76, Gly-108, and Phe-127 to Met-132.

It belongs to the RNA methyltransferase RlmH family. As to quaternary structure, homodimer.

It localises to the cytoplasm. The enzyme catalyses pseudouridine(1915) in 23S rRNA + S-adenosyl-L-methionine = N(3)-methylpseudouridine(1915) in 23S rRNA + S-adenosyl-L-homocysteine + H(+). Specifically methylates the pseudouridine at position 1915 (m3Psi1915) in 23S rRNA. The chain is Ribosomal RNA large subunit methyltransferase H from Lacticaseibacillus casei (strain BL23) (Lactobacillus casei).